The following is a 140-amino-acid chain: Nucleoside diphosphate kinase (140 aa).

ATP-binding residues include Lys9, Phe57, Arg85, Thr91, Arg102, and Asn112. Catalysis depends on His115, which acts as the Pros-phosphohistidine intermediate.

Belongs to the NDK family. As to quaternary structure, homotetramer. Mg(2+) is required as a cofactor.

The protein localises to the cytoplasm. The catalysed reaction is a 2'-deoxyribonucleoside 5'-diphosphate + ATP = a 2'-deoxyribonucleoside 5'-triphosphate + ADP. The enzyme catalyses a ribonucleoside 5'-diphosphate + ATP = a ribonucleoside 5'-triphosphate + ADP. Major role in the synthesis of nucleoside triphosphates other than ATP. The ATP gamma phosphate is transferred to the NDP beta phosphate via a ping-pong mechanism, using a phosphorylated active-site intermediate. The chain is Nucleoside diphosphate kinase from Chlorobaculum parvum (strain DSM 263 / NCIMB 8327) (Chlorobium vibrioforme subsp. thiosulfatophilum).